The following is a 262-amino-acid chain: 3-deoxy-manno-octulosonate cytidylyltransferase (262 aa).

This sequence belongs to the KdsB family.

Its subcellular location is the cytoplasm. It catalyses the reaction 3-deoxy-alpha-D-manno-oct-2-ulosonate + CTP = CMP-3-deoxy-beta-D-manno-octulosonate + diphosphate. The protein operates within nucleotide-sugar biosynthesis; CMP-3-deoxy-D-manno-octulosonate biosynthesis; CMP-3-deoxy-D-manno-octulosonate from 3-deoxy-D-manno-octulosonate and CTP: step 1/1. It participates in bacterial outer membrane biogenesis; lipopolysaccharide biosynthesis. Functionally, activates KDO (a required 8-carbon sugar) for incorporation into bacterial lipopolysaccharide in Gram-negative bacteria. The sequence is that of 3-deoxy-manno-octulosonate cytidylyltransferase from Koribacter versatilis (strain Ellin345).